The chain runs to 706 residues: MNSLFASTARGLEELLKSELEALGAHDCKIVQGGVHFQGDDRLMYQSLLWSRLASRILLPLNEFKVYSDLDLYLGVQAIDWPSIFGVDKTFAVHFSGVNDEIRNSQYGALKVKDAIVDSFTRKMDQRPTVAKQQPDIRVNVFLQRDMASVALDLSGEGLHQRGYRDLTGQAPLKENLAAAIIQRSGWQPGTPMVDPMCGSGTLLIEAAMMASDRAPGLHRGHWGFTAWNAFNEALWRELTTEAQVRARRGLLETSSRFFGSDIDRRVIEMARANARRAGVAELITFNANDISKLVNPLPEGPVGTVISNPPYGERLESEPALIALHNMFGRMMKTAFGGWRLSLFSASPELLSCLQLRADREFKAKNGPLDCVQKNYQLTANPQGAGGALVAEDYANRLRKNVKKLDKWAKQQGIECYRLYDADLPDYNVAVDRYGSKVVVQEYAPPKTIDPQKARQRLFDVINATLAVLELPSNQLVLKTRERQKGKNQYEKLAQKGEFLLVSEYNAKLWVNLTDYLDTGLFLDHRIARQMLGKMSQGKDFLNLFAYTGTASVHAGLGGARSTTTVDMSRTYLEWAEKNLRANGLTGQQHRLIQADCLSWLSNTDEQFDVIFIDPPTFSNSKRMETTFDVQRDHLVLMKELKRLLRRKGTIMFSNNKRGFQMDLAGIAALGLEAKEITALTQSEDFARNRQIHNCWLVTHSQEEK.

Residues 43-154 (LMYQSLLWSR…RDMASVALDL (112 aa)) form the THUMP domain.

The protein belongs to the methyltransferase superfamily. RlmKL family.

Its subcellular location is the cytoplasm. It catalyses the reaction guanosine(2445) in 23S rRNA + S-adenosyl-L-methionine = N(2)-methylguanosine(2445) in 23S rRNA + S-adenosyl-L-homocysteine + H(+). It carries out the reaction guanosine(2069) in 23S rRNA + S-adenosyl-L-methionine = N(2)-methylguanosine(2069) in 23S rRNA + S-adenosyl-L-homocysteine + H(+). Functionally, specifically methylates the guanine in position 2445 (m2G2445) and the guanine in position 2069 (m7G2069) of 23S rRNA. This is Ribosomal RNA large subunit methyltransferase K/L from Yersinia pseudotuberculosis serotype O:1b (strain IP 31758).